The sequence spans 173 residues: Large ribosomal subunit protein bL9 (173 aa).

It belongs to the bacterial ribosomal protein bL9 family.

Binds to the 23S rRNA. The sequence is that of Large ribosomal subunit protein bL9 from Chlamydia felis (strain Fe/C-56) (Chlamydophila felis).